A 413-amino-acid chain; its full sequence is Phosphopentomutase (413 aa).

6 residues coordinate Mn(2+): Asp-11, Asp-306, His-311, Asp-347, His-348, and His-359.

The protein belongs to the phosphopentomutase family. It depends on Mn(2+) as a cofactor.

The protein localises to the cytoplasm. The enzyme catalyses 2-deoxy-alpha-D-ribose 1-phosphate = 2-deoxy-D-ribose 5-phosphate. It carries out the reaction alpha-D-ribose 1-phosphate = D-ribose 5-phosphate. The protein operates within carbohydrate degradation; 2-deoxy-D-ribose 1-phosphate degradation; D-glyceraldehyde 3-phosphate and acetaldehyde from 2-deoxy-alpha-D-ribose 1-phosphate: step 1/2. Functionally, isomerase that catalyzes the conversion of deoxy-ribose 1-phosphate (dRib-1-P) and ribose 1-phosphate (Rib-1-P) to deoxy-ribose 5-phosphate (dRib-5-P) and ribose 5-phosphate (Rib-5-P), respectively. This chain is Phosphopentomutase, found in Helicobacter pylori (strain P12).